The primary structure comprises 522 residues: Leucine-rich repeat transmembrane neuronal protein 1 (522 aa).

The N-terminal stretch at 1 to 34 (MDFLLLGLCLYWLLRRPSGVVLCLLGACFQMLPA) is a signal peptide. The region spanning 35–63 (APSGCPQLCRCEGRLLYCEALNLTEAPHN) is the LRRNT domain. Residues 35–427 (APSGCPQLCR…HAENAVQIHK (393 aa)) lie on the Extracellular side of the membrane. N-linked (GlcNAc...) asparagine glycans are attached at residues Asn-56 and Asn-63. 10 LRR repeats span residues 64–87 (LSGLLGLSLRYNSLSELRAGQFTG), 89–111 (MQLTWLYLDHNHICSVQGDAFQK), 112–135 (LRRVKELTLSSNQITQLPNTTFRP), 137–159 (PNLRSVDLSYNKLQALAPDLFHG), 161–183 (RKLTTLHMRANAIQFVPVRIFQD), 184–207 (CRSLKFLDIGYNQLKSLARNSFAG), 209–231 (FKLTELHLEHNDLVKVNFAHFPR), 233–255 (ISLHSLCLRRNKVAIVVSSLDWV), 256–278 (WNLEKMDLSGNEIEYMEPHVFET), and 279–302 (VPHLQSLQLDSNRLTYIEPRILNS). Asn-130 is a glycosylation site (N-linked (GlcNAc...) asparagine). In terms of domain architecture, LRRCT spans 314–365 (NLWDCGRNVCALASWLNNFQGRYDGNLQCASPEYAQGEDVLDAVYAFHLCED). Residue Asn-380 is glycosylated (N-linked (GlcNAc...) asparagine). The interval 382-401 (SDLGPPASSATTLADGGEGQ) is disordered. A helical membrane pass occupies residues 428–448 (VVTGTMALIFSFLIVVLVLYV). The Cytoplasmic segment spans residues 449-522 (SWKCFPASLR…HQQPARECEV (74 aa)).

The protein belongs to the LRRTM family. Predominantly expressed in forebrain regions including thalamus and cerebral cortex.

It localises to the cell membrane. The protein resides in the postsynaptic cell membrane. Functionally, exhibits strong synaptogenic activity, restricted to excitatory presynaptic differentiation, acting at both pre- and postsynaptic level. This Homo sapiens (Human) protein is Leucine-rich repeat transmembrane neuronal protein 1 (LRRTM1).